The following is a 355-amino-acid chain: Holliday junction branch migration complex subunit RuvB (355 aa).

Positions 4–195 (TDKLTGADRL…FGIVARLEFY (192 aa)) are large ATPase domain (RuvB-L). Residues leucine 34, arginine 35, glycine 76, lysine 79, threonine 80, threonine 81, 142 to 144 (EDY), arginine 185, tyrosine 195, and arginine 232 contribute to the ATP site. A Mg(2+)-binding site is contributed by threonine 80. Residues 196–266 (TPDELARIVA…LADAALEMLD (71 aa)) form a small ATPAse domain (RuvB-S) region. The interval 269-355 (SVGFDLMDRK…DGGADLAEGL (87 aa)) is head domain (RuvB-H). DNA contacts are provided by arginine 305, arginine 324, and arginine 329.

It belongs to the RuvB family. In terms of assembly, homohexamer. Forms an RuvA(8)-RuvB(12)-Holliday junction (HJ) complex. HJ DNA is sandwiched between 2 RuvA tetramers; dsDNA enters through RuvA and exits via RuvB. An RuvB hexamer assembles on each DNA strand where it exits the tetramer. Each RuvB hexamer is contacted by two RuvA subunits (via domain III) on 2 adjacent RuvB subunits; this complex drives branch migration. In the full resolvosome a probable DNA-RuvA(4)-RuvB(12)-RuvC(2) complex forms which resolves the HJ.

It localises to the cytoplasm. It carries out the reaction ATP + H2O = ADP + phosphate + H(+). In terms of biological role, the RuvA-RuvB-RuvC complex processes Holliday junction (HJ) DNA during genetic recombination and DNA repair, while the RuvA-RuvB complex plays an important role in the rescue of blocked DNA replication forks via replication fork reversal (RFR). RuvA specifically binds to HJ cruciform DNA, conferring on it an open structure. The RuvB hexamer acts as an ATP-dependent pump, pulling dsDNA into and through the RuvAB complex. RuvB forms 2 homohexamers on either side of HJ DNA bound by 1 or 2 RuvA tetramers; 4 subunits per hexamer contact DNA at a time. Coordinated motions by a converter formed by DNA-disengaged RuvB subunits stimulates ATP hydrolysis and nucleotide exchange. Immobilization of the converter enables RuvB to convert the ATP-contained energy into a lever motion, pulling 2 nucleotides of DNA out of the RuvA tetramer per ATP hydrolyzed, thus driving DNA branch migration. The RuvB motors rotate together with the DNA substrate, which together with the progressing nucleotide cycle form the mechanistic basis for DNA recombination by continuous HJ branch migration. Branch migration allows RuvC to scan DNA until it finds its consensus sequence, where it cleaves and resolves cruciform DNA. The polypeptide is Holliday junction branch migration complex subunit RuvB (Cupriavidus metallidurans (strain ATCC 43123 / DSM 2839 / NBRC 102507 / CH34) (Ralstonia metallidurans)).